Here is a 78-residue protein sequence, read N- to C-terminus: Acyl carrier protein (78 aa).

Residues 2–77 enclose the Carrier domain; sequence SDTADRVQKI…DATKYIEEHK (76 aa). Ser-37 carries the post-translational modification O-(pantetheine 4'-phosphoryl)serine.

Belongs to the acyl carrier protein (ACP) family. Post-translationally, 4'-phosphopantetheine is transferred from CoA to a specific serine of apo-ACP by AcpS. This modification is essential for activity because fatty acids are bound in thioester linkage to the sulfhydryl of the prosthetic group.

It is found in the cytoplasm. The protein operates within lipid metabolism; fatty acid biosynthesis. Its function is as follows. Carrier of the growing fatty acid chain in fatty acid biosynthesis. This chain is Acyl carrier protein, found in Erythrobacter litoralis (strain HTCC2594).